The chain runs to 651 residues: Epithelial sodium channel subunit beta (651 aa).

Residues 1–50 (MFLKRWFIRALHRLQKGPGYGYSELFVWYCNNTNTHGPKRLIIEGPKKKT) are Cytoplasmic-facing. The chain crosses the membrane as a helical span at residues 51–71 (LWSLFTVTFACLVFWQWGLLI). The Extracellular segment spans residues 72–541 (QTYLSWGVSV…GGQFGFWMGG (470 aa)). 8 disulfide bridges follow: cysteine 98–cysteine 281, cysteine 205–cysteine 212, cysteine 258–cysteine 265, cysteine 370–cysteine 457, cysteine 395–cysteine 453, cysteine 399–cysteine 449, cysteine 408–cysteine 435, and cysteine 410–cysteine 424. The chain crosses the membrane as a helical span at residues 542-562 (SVLCIIEFGEVFIDCIWIAVI). Residues 563 to 651 (RFVKWYKNRK…TEHHSDSEDL (89 aa)) are Cytoplasmic-facing. The interval 612–651 (QPPDLYLPTTLEIPGTPPPKYDSLRVHPIDTEHHSDSEDL) is disordered. A compositionally biased stretch (basic and acidic residues) spans 633 to 651 (DSLRVHPIDTEHHSDSEDL).

Belongs to the amiloride-sensitive sodium channel (TC 1.A.6) family. SCNN1B subfamily. Component of the heterotrimeric epithelial sodium channel (ENaC) composed of an alpha/SCNN1A, a beta/SCNN1B and a gamma/SCNN1G subunit. As to expression, strongly expressed in gill, kidney and rectum and more weakly in brain, eye, liver and muscle.

The protein localises to the apical cell membrane. Its subcellular location is the cytoplasmic vesicle membrane. It catalyses the reaction Na(+)(in) = Na(+)(out). With respect to regulation, originally identified and characterized by its inhibition by the diuretic drug amiloride. In terms of biological role, this is one of the three pore-forming subunits of the heterotrimeric epithelial sodium channel (ENaC), a critical regulator of sodium balance and fluid homeostasis. ENaC operates in epithelial tissues, where it mediates the electrodiffusion of sodium ions from extracellular fluid through the apical membrane of cells, with water following osmotically. The sequence is that of Epithelial sodium channel subunit beta from Neoceratodus forsteri (Australian lungfish).